Consider the following 517-residue polypeptide: Ribonuclease Y (517 aa).

The helical transmembrane segment at 1-21 (MIEVLIGLGAGVAGVGAGYLY) threads the bilayer. One can recognise a KH domain in the interval 207 to 273 (LINVVNIKND…TRVIELLVED (67 aa)). The HD domain maps to 333–426 (ALAHSLEVAH…VCAADCLSAA (94 aa)).

The protein belongs to the RNase Y family.

It localises to the cell membrane. In terms of biological role, endoribonuclease that initiates mRNA decay. This chain is Ribonuclease Y, found in Campylobacter curvus (strain 525.92).